Here is a 168-residue protein sequence, read N- to C-terminus: UPF0134 protein MPN_524 (168 aa).

This sequence belongs to the UPF0134 family.

The sequence is that of UPF0134 protein MPN_524 from Mycoplasma pneumoniae (strain ATCC 29342 / M129 / Subtype 1) (Mycoplasmoides pneumoniae).